A 147-amino-acid chain; its full sequence is Basic phospholipase A2 beta-bungarotoxin A2 chain (147 aa).

The first 19 residues, methionine 1–alanine 19, serve as a signal peptide directing secretion. Residues alanine 20 to leucine 27 constitute a propeptide that is removed on maturation. 6 disulfides stabilise this stretch: cysteine 54/cysteine 146, cysteine 56/cysteine 72, cysteine 71/cysteine 127, cysteine 78/cysteine 120, cysteine 88/cysteine 113, and cysteine 106/cysteine 118. Residues tyrosine 55, glycine 57, and glycine 59 each coordinate Ca(2+). Histidine 75 is an active-site residue. Residue aspartate 76 participates in Ca(2+) binding. Aspartate 121 is a catalytic residue.

The protein belongs to the phospholipase A2 family. Group I subfamily. D49 sub-subfamily. Heterodimer; disulfide-linked. The A chains have phospholipase A2 activity and the B chains show homology with the basic protease inhibitors. The cofactor is Ca(2+). Expressed by the venom gland.

The protein resides in the secreted. The catalysed reaction is a 1,2-diacyl-sn-glycero-3-phosphocholine + H2O = a 1-acyl-sn-glycero-3-phosphocholine + a fatty acid + H(+). In terms of biological role, snake venom phospholipase A2 (PLA2) that inhibits neuromuscular transmission by blocking acetylcholine release from the nerve termini. PLA2 catalyzes the calcium-dependent hydrolysis of the 2-acyl groups in 3-sn-phosphoglycerides. The polypeptide is Basic phospholipase A2 beta-bungarotoxin A2 chain (Bungarus caeruleus (Indian krait)).